The chain runs to 238 residues: Large ribosomal subunit protein uL1 (238 aa).

This sequence belongs to the universal ribosomal protein uL1 family. In terms of assembly, part of the 50S ribosomal subunit.

Binds directly to 23S rRNA. The L1 stalk is quite mobile in the ribosome, and is involved in E site tRNA release. Its function is as follows. Protein L1 is also a translational repressor protein, it controls the translation of the L11 operon by binding to its mRNA. This Trichodesmium erythraeum (strain IMS101) protein is Large ribosomal subunit protein uL1.